The sequence spans 260 residues: Cytochrome c1-2, heme protein, mitochondrial (260 aa).

Residues 1–17 constitute a mitochondrion transit peptide; that stretch reads IGAGVSGLLGFATVASA. Residues 18 to 221 lie on the Mitochondrial intermembrane side of the membrane; it reads DEAEHGLECP…AAEPEMEERK (204 aa). A Cytochrome c domain is found at 43–150; sequence ASIRRGHQVY…NGQNYVFALL (108 aa). Heme c contacts are provided by Cys-56, Cys-59, His-60, and Met-179. A helical transmembrane segment spans residues 222 to 241; that stretch reads LMGFKWIFVLSLALLQAAYY. The Mitochondrial matrix segment spans residues 242-260; the sequence is RRLRWSVLKSRKLVLDVVN.

It belongs to the cytochrome c family. Component of the ubiquinol-cytochrome c oxidoreductase (cytochrome b-c1 complex, complex III, CIII), a multisubunit enzyme composed of 3 respiratory subunits cytochrome b, cytochrome c1 and Rieske protein, 2 core protein subunits, and additional low-molecular weight protein subunits. The complex exists as an obligatory dimer and forms supercomplexes (SCs) in the inner mitochondrial membrane with cytochrome c oxidase (complex IV, CIV). It depends on heme c as a cofactor. As to expression, in all tissues analyzed.

It is found in the mitochondrion inner membrane. The catalysed reaction is a quinol + 2 Fe(III)-[cytochrome c](out) = a quinone + 2 Fe(II)-[cytochrome c](out) + 2 H(+)(out). Its function is as follows. Component of the ubiquinol-cytochrome c oxidoreductase, a multisubunit transmembrane complex that is part of the mitochondrial electron transport chain which drives oxidative phosphorylation. The respiratory chain contains 3 multisubunit complexes succinate dehydrogenase (complex II, CII), ubiquinol-cytochrome c oxidoreductase (cytochrome b-c1 complex, complex III, CIII) and cytochrome c oxidase (complex IV, CIV), that cooperate to transfer electrons derived from NADH and succinate to molecular oxygen, creating an electrochemical gradient over the inner membrane that drives transmembrane transport and the ATP synthase. The cytochrome b-c1 complex catalyzes electron transfer from ubiquinol to cytochrome c, linking this redox reaction to translocation of protons across the mitochondrial inner membrane, with protons being carried across the membrane as hydrogens on the quinol. In the process called Q cycle, 2 protons are consumed from the matrix, 4 protons are released into the intermembrane space and 2 electrons are passed to cytochrome c. Cytochrome c1 is a catalytic core subunit containing a c-type heme. It transfers electrons from the [2Fe-2S] iron-sulfur cluster of the Rieske protein to cytochrome c. The polypeptide is Cytochrome c1-2, heme protein, mitochondrial (CYCL) (Solanum tuberosum (Potato)).